Consider the following 368-residue polypeptide: Transaldolase (368 aa).

Lys140 acts as the Schiff-base intermediate with substrate in catalysis.

The protein belongs to the transaldolase family. Type 2 subfamily.

The protein localises to the cytoplasm. It carries out the reaction D-sedoheptulose 7-phosphate + D-glyceraldehyde 3-phosphate = D-erythrose 4-phosphate + beta-D-fructose 6-phosphate. It functions in the pathway carbohydrate degradation; pentose phosphate pathway; D-glyceraldehyde 3-phosphate and beta-D-fructose 6-phosphate from D-ribose 5-phosphate and D-xylulose 5-phosphate (non-oxidative stage): step 2/3. Transaldolase is important for the balance of metabolites in the pentose-phosphate pathway. The sequence is that of Transaldolase from Thermobifida fusca (strain YX).